The chain runs to 1225 residues: Hybrid signal transduction histidine kinase C (1225 aa).

Residues 8 to 28 traverse the membrane as a helical segment; that stretch reads GFLLSTLFFTIISIILFYFFI. Positions 313 to 356 are enriched in low complexity; sequence LSPRSLSSSSSSSPSSSNNNGNTNNSGSLSPRSSNSNGSAVSPR. The interval 313 to 407 is disordered; it reads LSPRSLSSSS…SNGTISSPRT (95 aa). The span at 357–368 shows a compositional bias: polar residues; the sequence is NVSSNSMSPRGQ. Over residues 370–388 the composition is skewed to low complexity; that stretch reads SDRSISSPRGSSSSSSSSS. Over residues 389 to 407 the composition is skewed to polar residues; it reads NELAISPRNSNGTISSPRT. In terms of domain architecture, Histidine kinase spans 426–653; the sequence is HLSHELRTPI…TFHFVIPLET (228 aa). The residue at position 429 (His-429) is a Phosphohistidine; by autocatalysis. The Response regulatory 1 domain occupies 669–784; sequence SVLVVDKNPY…HLVACLLASM (116 aa). Residue Asp-721 is modified to 4-aspartylphosphate. Disordered regions lie at residues 809–832, 941–974, and 1021–1076; these read NNIN…SVYG, DDDS…DELN, and YLSP…PRAP. Polar residues predominate over residues 945–954; that stretch reads NNYCNTTGTM. The span at 1023 to 1037 shows a compositional bias: low complexity; sequence SPRSMNNNNGNNDNG. Over residues 1058–1072 the composition is skewed to polar residues; that stretch reads TSDTSSLAQSPNSLS. The Response regulatory 2 domain occupies 1078-1200; sequence KIMILDDNPV…CLELILRKWE (123 aa). Position 1127 is a 4-aspartylphosphate (Asp-1127).

It localises to the membrane. It catalyses the reaction ATP + protein L-histidine = ADP + protein N-phospho-L-histidine.. Acts in a signal transduction pathway that regulates the slug versus culmination choice. Believed to be the first component of a phosphorelay that couples the sensing of ammonia to the modulation of PKA activity and hence activates culmination and spore germination. Ammonium transporters amtA and amtC are thought to respectively activate and inhibit dhkC phosphorelay. This protein probably undergoes an ATP-dependent autophosphorylation at conserved His residue in the kinase core, and a phosphoryl group is then transferred to a conserved aspartate residue in the receiver domain. This Dictyostelium discoideum (Social amoeba) protein is Hybrid signal transduction histidine kinase C (dhkC).